The chain runs to 542 residues: Peptide chain release factor 3 (542 aa).

In terms of domain architecture, tr-type G spans 14–283; the sequence is ERRRNFAIIS…AFLDYALKPA (270 aa). Residues 23–30, 91–95, and 145–148 each bind GTP; these read SHPDAGKT, DTPGH, and NKLD.

The protein belongs to the TRAFAC class translation factor GTPase superfamily. Classic translation factor GTPase family. PrfC subfamily.

The protein localises to the cytoplasm. Its function is as follows. Increases the formation of ribosomal termination complexes and stimulates activities of RF-1 and RF-2. It binds guanine nucleotides and has strong preference for UGA stop codons. It may interact directly with the ribosome. The stimulation of RF-1 and RF-2 is significantly reduced by GTP and GDP, but not by GMP. The polypeptide is Peptide chain release factor 3 (Cyanothece sp. (strain PCC 7425 / ATCC 29141)).